A 363-amino-acid polypeptide reads, in one-letter code: Peptide chain release factor 2 (363 aa).

Gln-251 is modified (N5-methylglutamine).

The protein belongs to the prokaryotic/mitochondrial release factor family. In terms of processing, methylated by PrmC. Methylation increases the termination efficiency of RF2.

It is found in the cytoplasm. Peptide chain release factor 2 directs the termination of translation in response to the peptide chain termination codons UGA and UAA. This Helicobacter pylori (strain J99 / ATCC 700824) (Campylobacter pylori J99) protein is Peptide chain release factor 2 (prfB).